Reading from the N-terminus, the 247-residue chain is Probable transcriptional regulatory protein ECA2494 (247 aa).

Belongs to the TACO1 family.

The protein resides in the cytoplasm. This is Probable transcriptional regulatory protein ECA2494 from Pectobacterium atrosepticum (strain SCRI 1043 / ATCC BAA-672) (Erwinia carotovora subsp. atroseptica).